The following is a 541-amino-acid chain: Malate synthase (541 aa).

Arg-172 (proton acceptor) is an active-site residue. The active-site Proton donor is the Asp-452.

It belongs to the malate synthase family.

Its subcellular location is the cytoplasm. The enzyme catalyses glyoxylate + acetyl-CoA + H2O = (S)-malate + CoA + H(+). The protein operates within carbohydrate metabolism; glyoxylate cycle; (S)-malate from isocitrate: step 2/2. The protein is Malate synthase (mls) of Myxococcus xanthus (strain DK1622).